Here is a 111-residue protein sequence, read N- to C-terminus: Inner membrane protein H108R (111 aa).

Residues 10–32 traverse the membrane as a helical segment; sequence LIVIITILITTRELSTTMLIVSL. Residue asparagine 65 is glycosylated (N-linked (GlcNAc...) asparagine; by host).

The protein belongs to the asfivirus H108R family.

The protein resides in the virion membrane. This chain is Inner membrane protein H108R, found in African swine fever virus (isolate Tick/Malawi/Lil 20-1/1983) (ASFV).